A 105-amino-acid polypeptide reads, in one-letter code: Heat shock protein HspQ (105 aa).

This sequence belongs to the HspQ family.

The protein localises to the cytoplasm. Functionally, involved in the degradation of certain denaturated proteins, including DnaA, during heat shock stress. In Baumannia cicadellinicola subsp. Homalodisca coagulata, this protein is Heat shock protein HspQ.